Here is a 392-residue protein sequence, read N- to C-terminus: Bifunctional enzyme Fae/Hps (392 aa).

The segment at M1–I161 is formaldehyde-activating enzyme. Catalysis depends on H17, which acts as the Proton donor. D19, L48, K66, T68, and Q83 together coordinate substrate. The tract at residues M162 to F392 is 3-hexulose-6-phosphate synthase.

The protein in the N-terminal section; belongs to the formaldehyde-activating enzyme family. This sequence in the C-terminal section; belongs to the HPS/KGPDC family. HPS subfamily.

It carries out the reaction 5,6,7,8-tetrahydromethanopterin + formaldehyde = 5,10-methylenetetrahydromethanopterin + H2O. The catalysed reaction is D-ribulose 5-phosphate + formaldehyde = D-arabino-hex-3-ulose 6-phosphate. The protein operates within carbohydrate biosynthesis; D-ribose 5-phosphate biosynthesis. In terms of biological role, catalyzes the condensation of formaldehyde with tetrahydromethanopterin (H(4)MPT) to 5,10-methylenetetrahydromethanopterin. Functionally, catalyzes the reversible formation of ribulose-5-phosphate and formaldehyde from 3-hexulose-6-phosphate. The protein is Bifunctional enzyme Fae/Hps of Methanosarcina acetivorans (strain ATCC 35395 / DSM 2834 / JCM 12185 / C2A).